The following is a 1907-amino-acid chain: Receptor-type tyrosine-protein phosphatase S (1907 aa).

The signal sequence occupies residues 1 to 29; sequence MAPTWSPSVVSVVGPVGLFLVLLARGCLA. At 30–1257 the chain is on the extracellular side; the sequence is EEPPRFIREP…PQPIVDGEEG (1228 aa). 3 consecutive Ig-like C2-type domains span residues 33-123, 135-224, and 232-314; these read PRFI…AKLT, PNID…ANLY, and PRFS…AQIT. 2 disulfide bridges follow: C54/C107 and C156/C207. Residues 68-72 are important for binding to glycosaminoglycan chains; sequence KKGKK. 2 N-linked (GlcNAc...) asparagine glycosylation sites follow: N250 and N295. C253 and C298 form a disulfide bridge. Fibronectin type-III domains follow at residues 321 to 411, 416 to 510, 514 to 603, 608 to 705, 710 to 809, 810 to 906, 907 to 1008, and 1011 to 1095; these read APGT…TGEQ, APRN…TQQG, QPMN…TLQA, PPQD…TDED, PPRK…TKGA, VLGR…APRG, FPQI…LARD, and SPKN…TAFN. Residues 691–700 show a composition bias toward low complexity; the sequence is PGPESSPVVV. A disordered region spans residues 691 to 711; it reads PGPESSPVVVRTDEDVPSAPP. The N-linked (GlcNAc...) asparagine glycan is linked to N720. N916 is a glycosylation site (N-linked (GlcNAc...) asparagine). The helical transmembrane segment at 1258–1278 threads the bilayer; sequence LIWVIGPVLAVVFIICIVIAI. Over 1279–1907 the chain is Cytoplasmic; that stretch reads LLYKNKPDSK…YLGSFDHYAT (629 aa). The span at 1286–1296 shows a compositional bias: basic and acidic residues; the sequence is DSKRKDSEPRT. Residues 1286-1313 are disordered; it reads DSKRKDSEPRTKCLLNNADLAPHHPKDP. Tyrosine-protein phosphatase domains lie at 1352–1607 and 1639–1898; these read LSQE…LLEA and MELE…ALEY. Residues D1516, 1548–1554, and Q1592 contribute to the substrate site; that span reads CSAGVGR. The active-site Phosphocysteine intermediate is C1548. C1839 functions as the Phosphocysteine intermediate in the catalytic mechanism.

Belongs to the protein-tyrosine phosphatase family. Receptor class 2A subfamily. As to quaternary structure, binding to large heparan sulfate proteoglycan structures promotes oligomerization. Binding to chondroitin sulfate proteoglycan does not lead to oligomerization. Interacts (via Ig-like domains) with NTRK3. Interacts (via Ig-like domains) with NTRK1, but does not form detectable complexes with NTRK2. Interacts with PPFIA1, PPFIA2 and PPFIA3. In terms of processing, a cleavage occurs, separating the extracellular domain from the transmembrane segment. This process called 'ectodomain shedding' is thought to be involved in receptor desensitization, signal transduction and/or membrane localization. As to expression, detected in brain cortex, cerebellum and thoracic spinal cord (at protein level). Detected in motor cortex and white matter of the spinal cord, but not in spinal cord gray matter. Isoform 1 and isoform 6 are predominantly expressed in the brain (cerebrum and cerebellum) and to a lesser extent in the heart and skeletal muscle. Also found in neuronal-derived cell lines. Detected in the ganglion cell layer of the retina and in glial cells along the optic nerve. Detected in bone marrow and spleen plasmacytoid dendritic cells.

It localises to the cell membrane. Its subcellular location is the cell projection. The protein resides in the axon. It is found in the perikaryon. The protein localises to the cytoplasmic vesicle. It localises to the secretory vesicle. Its subcellular location is the synaptic vesicle membrane. The protein resides in the synapse. It is found in the synaptosome. The protein localises to the postsynaptic density. It localises to the neuron projection. Its subcellular location is the growth cone. It carries out the reaction O-phospho-L-tyrosyl-[protein] + H2O = L-tyrosyl-[protein] + phosphate. In terms of biological role, cell surface receptor that binds to glycosaminoglycans, including chondroitin sulfate proteoglycans and heparan sulfate proteoglycans. Binding to chondroitin sulfate and heparan sulfate proteoglycans has opposite effects on PTPRS oligomerization and regulation of neurite outgrowth. Contributes to the inhibition of neurite and axonal outgrowth by chondroitin sulfate proteoglycans, also after nerve transection. Plays a role in stimulating neurite outgrowth in response to the heparan sulfate proteoglycan GPC2. Required for normal brain development, especially for normal development of the pituitary gland and the olfactory bulb. Functions as a tyrosine phosphatase. Mediates dephosphorylation of NTRK1, NTRK2 and NTRK3. Plays a role in down-regulation of signaling cascades that lead to the activation of Akt and MAP kinases. Down-regulates TLR9-mediated activation of NF-kappa-B, as well as production of TNF, interferon alpha and interferon beta. The polypeptide is Receptor-type tyrosine-protein phosphatase S (Ptprs) (Mus musculus (Mouse)).